The chain runs to 217 residues: Small ribosomal subunit protein uS3c (217 aa).

Positions valine 46–alanine 117 constitute a KH type-2 domain.

It belongs to the universal ribosomal protein uS3 family. In terms of assembly, part of the 30S ribosomal subunit.

It localises to the plastid. Its subcellular location is the chloroplast. The protein is Small ribosomal subunit protein uS3c (rps3) of Marchantia polymorpha (Common liverwort).